Reading from the N-terminus, the 159-residue chain is Phosphopantetheine adenylyltransferase (159 aa).

Thr-9 provides a ligand contact to substrate. Residues 9–10 (TF) and His-17 each bind ATP. Positions 41, 73, and 87 each coordinate substrate. Residues 88-90 (GLR), Glu-98, and 123-129 (YSFISST) each bind ATP.

Belongs to the bacterial CoaD family. In terms of assembly, homohexamer. Requires Mg(2+) as cofactor.

It is found in the cytoplasm. It carries out the reaction (R)-4'-phosphopantetheine + ATP + H(+) = 3'-dephospho-CoA + diphosphate. The protein operates within cofactor biosynthesis; coenzyme A biosynthesis; CoA from (R)-pantothenate: step 4/5. Its function is as follows. Reversibly transfers an adenylyl group from ATP to 4'-phosphopantetheine, yielding dephospho-CoA (dPCoA) and pyrophosphate. The chain is Phosphopantetheine adenylyltransferase from Pseudomonas syringae pv. syringae (strain B728a).